The chain runs to 398 residues: Histone-lysine N-methyltransferase ASHR2 (398 aa).

In terms of domain architecture, SET spans 11–270 (TLLRVAEIGG…EGREVCLSYF (260 aa)).

Belongs to the class V-like SAM-binding methyltransferase superfamily. Histone-lysine methyltransferase family. SET2 subfamily.

Its subcellular location is the nucleus. It localises to the chromosome. It carries out the reaction L-lysyl-[histone] + S-adenosyl-L-methionine = N(6)-methyl-L-lysyl-[histone] + S-adenosyl-L-homocysteine + H(+). Its function is as follows. Histone methyltransferase. This is Histone-lysine N-methyltransferase ASHR2 (ASHR2) from Arabidopsis thaliana (Mouse-ear cress).